We begin with the raw amino-acid sequence, 87 residues long: Small ribosomal subunit protein uS15c (87 aa).

This sequence belongs to the universal ribosomal protein uS15 family. In terms of assembly, part of the 30S ribosomal subunit.

It localises to the plastid. The protein resides in the chloroplast. The polypeptide is Small ribosomal subunit protein uS15c (rps15) (Oenothera glazioviana (Large-flowered evening primrose)).